Reading from the N-terminus, the 451-residue chain is UPF0210 protein lmo0534 (451 aa).

This sequence belongs to the UPF0210 family. As to quaternary structure, homodimer.

The polypeptide is UPF0210 protein lmo0534 (Listeria monocytogenes serovar 1/2a (strain ATCC BAA-679 / EGD-e)).